A 571-amino-acid chain; its full sequence is Urease subunit alpha (571 aa).

Positions 132-571 (GAIDTHIHFI…LPMGQKYFLF (440 aa)) constitute a Urease domain. Residues H137, H139, and K220 each contribute to the Ni(2+) site. K220 carries the post-translational modification N6-carboxylysine. H222 contacts substrate. The Ni(2+) site is built by H249 and H275. H323 acts as the Proton donor in catalysis. D363 is a Ni(2+) binding site.

Belongs to the metallo-dependent hydrolases superfamily. Urease alpha subunit family. As to quaternary structure, heterotrimer of UreA (gamma), UreB (beta) and UreC (alpha) subunits. Three heterotrimers associate to form the active enzyme. Ni cation is required as a cofactor. Carboxylation allows a single lysine to coordinate two nickel ions.

Its subcellular location is the cytoplasm. The enzyme catalyses urea + 2 H2O + H(+) = hydrogencarbonate + 2 NH4(+). It participates in nitrogen metabolism; urea degradation; CO(2) and NH(3) from urea (urease route): step 1/1. The polypeptide is Urease subunit alpha (Corynebacterium urealyticum (strain ATCC 43042 / DSM 7109)).